Here is a 142-residue protein sequence, read N- to C-terminus: Putative pre-16S rRNA nuclease (142 aa).

Belongs to the YqgF nuclease family.

It localises to the cytoplasm. Could be a nuclease involved in processing of the 5'-end of pre-16S rRNA. The protein is Putative pre-16S rRNA nuclease of Lactobacillus delbrueckii subsp. bulgaricus (strain ATCC 11842 / DSM 20081 / BCRC 10696 / JCM 1002 / NBRC 13953 / NCIMB 11778 / NCTC 12712 / WDCM 00102 / Lb 14).